A 557-amino-acid chain; its full sequence is GMP synthase [glutamine-hydrolyzing] (557 aa).

The Glutamine amidotransferase type-1 domain occupies 13–209 (TILTLDFGSQ…AVDICGANPN (197 aa)). Cysteine 89 acts as the Nucleophile in catalysis. Residues histidine 183 and glutamate 185 contribute to the active site. Residues 210-414 (WTMSKFVDQE…LGIAHELVMR (205 aa)) enclose the GMPS ATP-PPase domain. Residue 238 to 244 (SGGVDST) participates in ATP binding. 4 residues coordinate XMP: arginine 311, aspartate 476, lysine 549, and glutamate 555.

As to quaternary structure, homodimer. It depends on Mg(2+) as a cofactor.

The protein resides in the cytoplasm. Its subcellular location is the cytosol. It catalyses the reaction XMP + L-glutamine + ATP + H2O = GMP + L-glutamate + AMP + diphosphate + 2 H(+). It functions in the pathway purine metabolism; GMP biosynthesis; GMP from XMP (L-Gln route): step 1/1. Inhibited by 6-diazo-5-oxo-l-norleucine (DON) and acivicin (ACI). Catalyzes the conversion of xanthine monophosphate (XMP) to GMP in the presence of glutamine and ATP through an adenyl-XMP intermediate. In Aspergillus fumigatus (strain ATCC MYA-4609 / CBS 101355 / FGSC A1100 / Af293) (Neosartorya fumigata), this protein is GMP synthase [glutamine-hydrolyzing] (gua1).